We begin with the raw amino-acid sequence, 125 residues long: uncharacterized protein (125 aa).

Helical transmembrane passes span 20 to 42 (RNGG…LTIL), 57 to 76 (LMNA…GVVV), and 81 to 103 (YLFV…YMAS).

It is found in the cell membrane. This is an uncharacterized protein from Archaeoglobus fulgidus (strain ATCC 49558 / DSM 4304 / JCM 9628 / NBRC 100126 / VC-16).